The primary structure comprises 975 residues: Lateral signaling target protein 2 homolog (975 aa).

Disordered stretches follow at residues 299 to 458 (PLGS…GTDE) and 504 to 523 (YGTAEQQGHQGLEEEEPSTS). 4 stretches are compositionally biased toward low complexity: residues 302–352 (SSSI…TTNT), 365–376 (NNHNSNSNSSSN), 383–400 (TLRSPSMLSLSTTSTPTA), and 408–429 (PSHSIASTSSAATSSTNPPADW). Acidic residues predominate over residues 430 to 458 (SDGDDEDEDDDDIDVDEEDPESSDDGTDE). Residues serine 540 and serine 541 each carry the phosphoserine modification. Disordered stretches follow at residues 556 to 633 (EEHM…SSLS) and 740 to 891 (DNVF…SPPA). Residues 564 to 602 (GRHHRHHQSHHHHHHHRHSHQHQHRQPHPHRTTRSGRKR) are compositionally biased toward basic residues. The segment covering 621–633 (LASGDTSAASSLS) has biased composition (low complexity). Residues 751–770 (ATGQRHSAGASMQRNNTIDL) are compositionally biased toward polar residues. The residue at position 796 (serine 796) is a Phosphoserine. Composition is skewed to low complexity over residues 802 to 860 (AASS…PVSA) and 877 to 890 (PSSATSTSATLSPP). An FYVE-type zinc finger spans residues 895 to 955 (DGKAPRCMAC…VCRDCYVREV (61 aa)). Zn(2+) is bound by residues cysteine 901, cysteine 904, cysteine 917, cysteine 920, cysteine 925, cysteine 928, cysteine 947, and cysteine 950.

The protein belongs to the lst-2 family.

In terms of biological role, negative regulator of epidermal growth factor receptor (EGFR) signaling. The polypeptide is Lateral signaling target protein 2 homolog (Drosophila sechellia (Fruit fly)).